The sequence spans 73 residues: Homeodomain-only protein (73 aa).

Positions 3–62 (TETASGPTEDQVEILEYNFNKVNKHPDPTTLCLIAAEAGLSEEETQKWFKQRLAQWRRSE) form a DNA-binding region, homeobox; degenerate.

In terms of assembly, interacts with serum response factor (SRF). Component of a large complex containing histone deacetylases such as HDAC2. Interacts with the acetylated forms of HSPA1A and HSPA1B. Interacts with HSPA8.

The protein resides in the nucleus. The protein localises to the cytoplasm. Functionally, atypical homeodomain protein which does not bind DNA and is required to modulate cardiac growth and development. Acts via its interaction with SRF, thereby modulating the expression of SRF-dependent cardiac-specific genes and cardiac development. Prevents SRF-dependent transcription either by inhibiting SRF binding to DNA or by recruiting histone deacetylase (HDAC) proteins that prevent transcription by SRF. Overexpression causes cardiac hypertrophy. Acts as a co-chaperone for HSPA1A and HSPA1B chaperone proteins and assists in chaperone-mediated protein refolding. The protein is Homeodomain-only protein (HOPX) of Bos taurus (Bovine).